Reading from the N-terminus, the 231-residue chain is Response regulator Rre1 (231 aa).

The Response regulatory domain maps to 6-123; the sequence is SLLLVDDEPG…ELEAIVRNLL (118 aa). Asp-56 bears the 4-aspartylphosphate mark. The HTH luxR-type domain maps to 163–228; it reads PSPIKLDFTP…ELVRFALQHG (66 aa). Residues 187-206 constitute a DNA-binding region (H-T-H motif); that stretch reads NKEIAAQLKTSVRNVEKYVS.

As to quaternary structure, interacts with histidine kinase Hik2; may accept phosphate from Hik2.

Member of at least 2 two-component regulatory systems Hik2/Rre1 and Hik34/Rre1. Responds to hyperosmotic stress, regulates expression of at least 24 genes including dnaK2 and hspA with Hik34 and sigB (sll0306), sll0528, slr1119, slr0852 and ssr3188 with Hik2. Responds to salt stress, regulates expression of at least 24 genes including adhA, dnaK2 and hspA with Hik34. Binds the adhA promoter. Phosphorylated by Hik2 in vitro. Phosphorylated protein has 10-fold higher affinity for DNA than unphosphorylated protein. This chain is Response regulator Rre1, found in Synechocystis sp. (strain ATCC 27184 / PCC 6803 / Kazusa).